A 493-amino-acid polypeptide reads, in one-letter code: Glutamate--tRNA ligase (493 aa).

Residues 10–20 carry the 'HIGH' region motif; the sequence is PSPTGDPHVGT. The 'KMSKS' region motif lies at 251–255; sequence KLSKR. Position 254 (K254) interacts with ATP.

The protein belongs to the class-I aminoacyl-tRNA synthetase family. Glutamate--tRNA ligase type 1 subfamily. In terms of assembly, monomer.

Its subcellular location is the cytoplasm. The catalysed reaction is tRNA(Glu) + L-glutamate + ATP = L-glutamyl-tRNA(Glu) + AMP + diphosphate. Catalyzes the attachment of glutamate to tRNA(Glu) in a two-step reaction: glutamate is first activated by ATP to form Glu-AMP and then transferred to the acceptor end of tRNA(Glu). This Pseudomonas putida (strain ATCC 700007 / DSM 6899 / JCM 31910 / BCRC 17059 / LMG 24140 / F1) protein is Glutamate--tRNA ligase.